The following is a 1249-amino-acid chain: Minor capsid protein M1249L (1249 aa).

This sequence belongs to the asfivirus M1249L family. As to quaternary structure, interacts with the minor capsid protein p17 and with the hexon capsid protein p72 capsomers; these interactions form a rigid zipper structure that stabilizes the capsomers. Interacts with host IRF3.

It is found in the virion. The protein localises to the host cytoplasm. Functionally, together with the penton and the other minor capsid proteins (p17, p49), forms a complicated network immediately below the outer capsid shell, stabilizing the whole capsid. In addition, blocks IFN-beta transactivation mediated by the cGAS-STING pathway and regulates the transcriptional activity of IFN-beta. Mechanistically, suppresses the phosphorylation of host key adapter protein TBK1 and degrades host IRF3 in the cytoplasm. This chain is Minor capsid protein M1249L, found in African swine fever virus (isolate Tick/Malawi/Lil 20-1/1983) (ASFV).